A 327-amino-acid polypeptide reads, in one-letter code: GTP 3',8-cyclase (327 aa).

The Radical SAM core domain maps to 7–232 (HHDRQFRYLR…IKRDRTAGPA (226 aa)). Arg16 contacts GTP. 2 residues coordinate [4Fe-4S] cluster: Cys23 and Cys27. Tyr29 lines the S-adenosyl-L-methionine pocket. Cys30 is a binding site for [4Fe-4S] cluster. Arg66 lines the GTP pocket. Gly70 is an S-adenosyl-L-methionine binding site. Residue Thr97 coordinates GTP. Ser121 serves as a coordination point for S-adenosyl-L-methionine. Lys158 contributes to the GTP binding site. Met192 is a binding site for S-adenosyl-L-methionine. Residues Cys255 and Cys258 each contribute to the [4Fe-4S] cluster site. 260–262 (RLR) is a binding site for GTP. Cys272 is a [4Fe-4S] cluster binding site.

This sequence belongs to the radical SAM superfamily. MoaA family. In terms of assembly, monomer and homodimer. [4Fe-4S] cluster is required as a cofactor.

The enzyme catalyses GTP + AH2 + S-adenosyl-L-methionine = (8S)-3',8-cyclo-7,8-dihydroguanosine 5'-triphosphate + 5'-deoxyadenosine + L-methionine + A + H(+). It functions in the pathway cofactor biosynthesis; molybdopterin biosynthesis. Catalyzes the cyclization of GTP to (8S)-3',8-cyclo-7,8-dihydroguanosine 5'-triphosphate. The chain is GTP 3',8-cyclase from Synechococcus elongatus (strain ATCC 33912 / PCC 7942 / FACHB-805) (Anacystis nidulans R2).